A 372-amino-acid polypeptide reads, in one-letter code: Peptidyl-prolyl cis-trans isomerase D (372 aa).

The PPIase cyclophilin-type domain occupies 14–178 (YFDISIGGKS…KEALIVDCGE (165 aa)). 3 TPR repeats span residues 219 to 252 (AKAS…INEE), 271 to 304 (FSLN…GGVK), and 309 to 342 (AKAF…APND).

The protein belongs to the cyclophilin-type PPIase family. PPIase D subfamily.

It is found in the cytoplasm. The enzyme catalyses [protein]-peptidylproline (omega=180) = [protein]-peptidylproline (omega=0). Its function is as follows. PPIases accelerate the folding of proteins. It catalyzes the cis-trans isomerization of proline imidic peptide bonds in oligopeptides. The polypeptide is Peptidyl-prolyl cis-trans isomerase D (CPR6) (Gibberella zeae (strain ATCC MYA-4620 / CBS 123657 / FGSC 9075 / NRRL 31084 / PH-1) (Wheat head blight fungus)).